We begin with the raw amino-acid sequence, 159 residues long: Endoribonuclease YbeY (159 aa).

Zn(2+)-binding residues include histidine 119, histidine 123, and histidine 129.

Belongs to the endoribonuclease YbeY family. The cofactor is Zn(2+).

The protein localises to the cytoplasm. Single strand-specific metallo-endoribonuclease involved in late-stage 70S ribosome quality control and in maturation of the 3' terminus of the 16S rRNA. The chain is Endoribonuclease YbeY from Acinetobacter baylyi (strain ATCC 33305 / BD413 / ADP1).